The chain runs to 63 residues: Large ribosomal subunit protein bL28 (63 aa).

Belongs to the bacterial ribosomal protein bL28 family.

This chain is Large ribosomal subunit protein bL28, found in Syntrophotalea carbinolica (strain DSM 2380 / NBRC 103641 / GraBd1) (Pelobacter carbinolicus).